Reading from the N-terminus, the 985-residue chain is Alanine--tRNA ligase, mitochondrial (985 aa).

The N-terminal 23 residues, 1–23 (MAASVAAAARRLRRAIRRSPAWR), are a transit peptide targeting the mitochondrion. ATP contacts are provided by residues Arg-110, His-128, Trp-210, and 240-242 (LWN). L-alanine is bound by residues Asn-242 and Asp-265. Gly-269 is an ATP binding site. Residues His-632, His-636, Cys-749, and His-753 each coordinate Zn(2+).

The protein belongs to the class-II aminoacyl-tRNA synthetase family. In terms of assembly, monomer. Requires Zn(2+) as cofactor.

The protein localises to the mitochondrion. The catalysed reaction is tRNA(Ala) + L-alanine + ATP = L-alanyl-tRNA(Ala) + AMP + diphosphate. It catalyses the reaction (S)-lactate + ATP + H(+) = (S)-lactoyl-AMP + diphosphate. The enzyme catalyses (S)-lactoyl-AMP + L-lysyl-[protein] = N(6)-[(S)-lactoyl]-L-lysyl-[protein] + AMP + 2 H(+). In terms of biological role, catalyzes the attachment of alanine to tRNA(Ala) in a two-step reaction: alanine is first activated by ATP to form Ala-AMP and then transferred to the acceptor end of tRNA(Ala). Also edits incorrectly charged tRNA(Ala) via its editing domain. In presence of high levels of lactate, also acts as a protein lactyltransferase that mediates lactylation of lysine residues in target proteins, such as CGAS. Acts as an inhibitor of cGAS/STING signaling by catalyzing lactylation of CGAS, preventing the formation of liquid-like droplets in which CGAS is activated. This Homo sapiens (Human) protein is Alanine--tRNA ligase, mitochondrial.